Here is a 228-residue protein sequence, read N- to C-terminus: Sugar fermentation stimulation protein homolog (228 aa).

The protein belongs to the SfsA family.

The protein is Sugar fermentation stimulation protein homolog of Desulfitobacterium hafniense (strain Y51).